A 518-amino-acid polypeptide reads, in one-letter code: Reduced folate transporter (518 aa).

Methionine 1 carries the N-acetylmethionine modification. The Cytoplasmic segment spans residues 1-29 (MVPTGQVAEKQACEEPRQDRELKSWRCLV). The chain crosses the membrane as a helical span at residues 30–50 (FYLCFFGFMAQLRPGESFITP). Folate-binding residues include isoleucine 48 and threonine 49. At 51–62 (YLLQQNFTIEQV) the chain is on the extracellular side. Asparagine 56 carries N-linked (GlcNAc...) asparagine glycosylation. The chain crosses the membrane as a helical span at residues 63-85 (TNEIIPVLPYSHLAVLVPIFLLT). Residues 86–89 (DYLR) lie on the Cytoplasmic side of the membrane. Residues 90–110 (YKPILILQCLSFMCVWLLLLL) form a helical membrane-spanning segment. The Extracellular segment spans residues 111-114 (GTSV). Residues 115 to 137 (VHMQLMEVFYSVTMAARIAYSSY) traverse the membrane as a helical segment. Folate-binding residues include glutamate 121 and arginine 131. The Cytoplasmic segment spans residues 138 to 151 (IFSLVRPSRYQRMA). Residues 152 to 176 (SYSRAAVLLGVFTSSVLGQVLWPLE) traverse the membrane as a helical segment. Valine 162 serves as a coordination point for folate. Topologically, residues 177–181 (QKSQN) are extracellular. A helical membrane pass occupies residues 182–200 (SNMLNYISLGFIIFSLGLS). Residues 201-266 (LFLKRPKHSL…LSELVGNLRQ (66 aa)) lie on the Cytoplasmic side of the membrane. Residues 267–292 (PQLRLWCLWWVFNSAGYYLIVYYVHV) form a helical membrane-spanning segment. Folate is bound by residues alanine 281, glycine 282, and isoleucine 286. The Extracellular portion of the chain corresponds to 293–300 (LWSIDKNL). Residues 301–323 (NYNGAVDAASTLLSAITSFSAGF) form a helical membrane-spanning segment. Over 324–329 (VKIRWA) the chain is Cytoplasmic. Residues 330–350 (LWSKLVIASVIAIQAGLVFCM) form a helical membrane-spanning segment. The Extracellular portion of the chain corresponds to 351 to 353 (YMV). The helical transmembrane segment at 354–377 (HYVTWVHKIWVLYMTYVLFRGAYQ) threads the bilayer. Tyrosine 366 and valine 370 together coordinate folate. Residues 378–391 (FLVPIATFQIASSL) lie on the Cytoplasmic side of the membrane. Residues 392–415 (SKELCALVFGINTFLATALKTAIT) form a helical membrane-spanning segment. The interval 407 to 419 (ATALKTAITLVVS) is required for substrate-binding. The Extracellular segment spans residues 416 to 423 (LVVSDKRG). The chain crosses the membrane as a helical span at residues 424–448 (LGLKVEKQFCIYSVYFMVLSVICFV). At 449–512 (GAVLDGVRYC…DGVEDSEASL (64 aa)) the chain is on the cytoplasmic side. Phosphoserine is present on residues serine 473, serine 478, and serine 483. The segment at 480–518 (QVPSMQDGGLGGLQPSAPQLLPEDGVEDSEASLRAEAKA) is disordered.

The protein belongs to the reduced folate carrier (RFC) transporter (TC 2.A.48) family.

The protein resides in the cell membrane. The protein localises to the apical cell membrane. Its subcellular location is the basolateral cell membrane. The enzyme catalyses 5-amino-1-(5-phospho-beta-D-ribosyl)imidazole-4-carboxamide(in) + (6S)-5-methyl-5,6,7,8-tetrahydrofolate(out) = 5-amino-1-(5-phospho-beta-D-ribosyl)imidazole-4-carboxamide(out) + (6S)-5-methyl-5,6,7,8-tetrahydrofolate(in). Functionally, antiporter that mediates the import of reduced folates, driven by the export of organic anions. Also acts as an importer of immunoreactive cyclic dinucleotides, but with a lower transporter activity. Mechanistically, acts as a secondary active transporter, which exports intracellular organic anions down their concentration gradients to facilitate the uptake of its substrates. Has high affinity for N5-methyltetrahydrofolate, the predominant circulating form of folate. Also mediates the import of antifolate drug methotrexate. 5-amino-4-imidazolecarboxamide riboside (AICAR), when phosphorylated to AICAR monophosphate, can serve as an organic anion for antiporter activity. The chain is Reduced folate transporter from Cricetulus griseus (Chinese hamster).